The primary structure comprises 209 residues: Guanylate kinase (209 aa).

In terms of domain architecture, Guanylate kinase-like spans 8–186 (GVLYIVSAPS…ALQDLVAITR (179 aa)). 15 to 22 (APSGAGKT) is an ATP binding site.

It belongs to the guanylate kinase family.

The protein resides in the cytoplasm. The catalysed reaction is GMP + ATP = GDP + ADP. Its function is as follows. Essential for recycling GMP and indirectly, cGMP. This Thiobacillus denitrificans (strain ATCC 25259 / T1) protein is Guanylate kinase.